The primary structure comprises 242 residues: Succinyl-CoA:3-ketoacid coenzyme A transferase subunit A (242 aa).

33 to 39 lines the CoA pocket; the sequence is GGFGLCG.

The protein belongs to the 3-oxoacid CoA-transferase subunit A family. Heterodimer of a subunit A and a subunit B.

The enzyme catalyses a 3-oxo acid + succinyl-CoA = a 3-oxoacyl-CoA + succinate. The protein operates within bacterial outer membrane biogenesis; lipopolysaccharide biosynthesis. The chain is Succinyl-CoA:3-ketoacid coenzyme A transferase subunit A (lpsI) from Xanthomonas campestris pv. campestris (strain ATCC 33913 / DSM 3586 / NCPPB 528 / LMG 568 / P 25).